The chain runs to 396 residues: MAEKEHYERTKPHVNIGTIGHVDHGKTTLTAAITKVLAAKGLAKAEDYSDIDAAPEEKERGITINTAHVEYETEKRHYAHIDAPGHADYVKNMITGAAQMDGAILVVAATDGPMPQTREHILLARQVGVEYIVVFLNKTDLVDDDELVDLVEMEVRDLLSEYDFPGDDVPVVRGSALKALEGDPEQEQVVLHLLDVVDEYIPTPKRPTDKPFMMPVEDVFTITGRGTVASGRIDRGTVKIGDEVEIVGLKEDVIKSTVTGVEMFHKTLDLGEAGDNVGILLRGVSHDQIERGQVLAEPGSIQTHKQFKGEVYVMTKEEGGRHTPFFSNYRPQFYFHTTDVTGTIELPDGVEMVMPGDNVTFTVELQKPVALEKGLKFTIREGGHTVGAGVVSEVLD.

The region spanning 11–205 is the tr-type G domain; that stretch reads KPHVNIGTIG…VVDEYIPTPK (195 aa). The interval 20–27 is G1; the sequence is GHVDHGKT. Position 20 to 27 (20 to 27) interacts with GTP; the sequence is GHVDHGKT. T27 is a binding site for Mg(2+). The G2 stretch occupies residues 61-65; that stretch reads GITIN. Residues 82–85 are G3; that stretch reads DAPG. Residues 82–86 and 137–140 contribute to the GTP site; these read DAPGH and NKTD. The interval 137-140 is G4; the sequence is NKTD. The G5 stretch occupies residues 175 to 177; that stretch reads SAL.

It belongs to the TRAFAC class translation factor GTPase superfamily. Classic translation factor GTPase family. EF-Tu/EF-1A subfamily. As to quaternary structure, monomer.

It is found in the cytoplasm. The enzyme catalyses GTP + H2O = GDP + phosphate + H(+). In terms of biological role, GTP hydrolase that promotes the GTP-dependent binding of aminoacyl-tRNA to the A-site of ribosomes during protein biosynthesis. The chain is Elongation factor Tu from Limosilactobacillus fermentum (strain NBRC 3956 / LMG 18251) (Lactobacillus fermentum).